The sequence spans 177 residues: Putative fimbrin-like protein FimI (177 aa).

A signal peptide spans 1 to 19 (MIRKGAALVGLVLMSPVIA). The cysteines at positions 40 and 81 are disulfide-linked.

It belongs to the fimbrial protein family.

It localises to the fimbrium. The sequence is that of Putative fimbrin-like protein FimI (fimI) from Salmonella typhi.